A 121-amino-acid polypeptide reads, in one-letter code: Small ribosomal subunit protein uS13 (121 aa).

Residues 91–121 form a disordered region; that stretch reads HRKGLPMRGQRTRTNARTRKGPRKAGVALKK.

This sequence belongs to the universal ribosomal protein uS13 family. Part of the 30S ribosomal subunit. Forms a loose heterodimer with protein S19. Forms two bridges to the 50S subunit in the 70S ribosome.

Located at the top of the head of the 30S subunit, it contacts several helices of the 16S rRNA. In the 70S ribosome it contacts the 23S rRNA (bridge B1a) and protein L5 of the 50S subunit (bridge B1b), connecting the 2 subunits; these bridges are implicated in subunit movement. Contacts the tRNAs in the A and P-sites. The chain is Small ribosomal subunit protein uS13 from Cupriavidus necator (strain ATCC 17699 / DSM 428 / KCTC 22496 / NCIMB 10442 / H16 / Stanier 337) (Ralstonia eutropha).